Here is a 209-residue protein sequence, read N- to C-terminus: Ribosomal RNA large subunit methyltransferase E (209 aa).

The S-adenosyl-L-methionine site is built by glycine 63, tryptophan 65, aspartate 83, aspartate 99, and aspartate 124. The Proton acceptor role is filled by lysine 164.

It belongs to the class I-like SAM-binding methyltransferase superfamily. RNA methyltransferase RlmE family.

It localises to the cytoplasm. It catalyses the reaction uridine(2552) in 23S rRNA + S-adenosyl-L-methionine = 2'-O-methyluridine(2552) in 23S rRNA + S-adenosyl-L-homocysteine + H(+). Its function is as follows. Specifically methylates the uridine in position 2552 of 23S rRNA at the 2'-O position of the ribose in the fully assembled 50S ribosomal subunit. The protein is Ribosomal RNA large subunit methyltransferase E of Vibrio parahaemolyticus serotype O3:K6 (strain RIMD 2210633).